Reading from the N-terminus, the 512-residue chain is Probable amidase At4g34880 (512 aa).

Catalysis depends on charge relay system residues K117 and S198. The Acyl-ester intermediate role is filled by S222.

This sequence belongs to the amidase family. Expressed in vasculature of roots, cotyledons, leaves and sepals.

The enzyme catalyses a monocarboxylic acid amide + H2O = a monocarboxylate + NH4(+). The protein is Probable amidase At4g34880 of Arabidopsis thaliana (Mouse-ear cress).